The chain runs to 381 residues: Creatine kinase M-type (381 aa).

A Phosphagen kinase N-terminal domain is found at 11 to 98 (KLNFKAEEEY…FDPIIQDRHG (88 aa)). The Phosphagen kinase C-terminal domain occupies 125–367 (YVLSSRVRTG…KLMVEMEKKL (243 aa)). Position 128-132 (128-132 (SSRVR)) interacts with ATP. Ser-164 is modified (phosphoserine). Thr-166 carries the phosphothreonine modification. Phosphoserine is present on Ser-178. Thr-180 bears the Phosphothreonine mark. An ATP-binding site is contributed by His-191. A Phosphoserine modification is found at Ser-199. Residues Arg-236 and Arg-292 each contribute to the ATP site. 2 positions are modified to phosphothreonine: Thr-313 and Thr-322. Residues 320 to 325 (RGTGGV) and Asp-335 each bind ATP. Ser-372 is subject to Phosphoserine.

This sequence belongs to the ATP:guanido phosphotransferase family. Dimer of identical or non-identical chains, which can be either B (brain type) or M (muscle type). With MM being the major form in skeletal muscle and myocardium, MB existing in myocardium, and BB existing in many tissues, especially brain.

It carries out the reaction creatine + ATP = N-phosphocreatine + ADP + H(+). In terms of biological role, reversibly catalyzes the transfer of phosphate between ATP and various phosphogens (e.g. creatine phosphate). Creatine kinase isoenzymes play a central role in energy transduction in tissues with large, fluctuating energy demands, such as skeletal muscle, heart, brain and spermatozoa. In Sus scrofa (Pig), this protein is Creatine kinase M-type (CKM).